We begin with the raw amino-acid sequence, 342 residues long: Aspartate carbamoyltransferase catalytic subunit (342 aa).

Carbamoyl phosphate-binding residues include arginine 54 and threonine 55. Lysine 82 contacts L-aspartate. The carbamoyl phosphate site is built by arginine 104, histidine 134, and glutamine 137. L-aspartate contacts are provided by arginine 177 and arginine 232. The carbamoyl phosphate site is built by glycine 277 and proline 278.

Belongs to the aspartate/ornithine carbamoyltransferase superfamily. ATCase family. Heterododecamer (2C3:3R2) of six catalytic PyrB chains organized as two trimers (C3), and six regulatory PyrI chains organized as three dimers (R2).

The catalysed reaction is carbamoyl phosphate + L-aspartate = N-carbamoyl-L-aspartate + phosphate + H(+). The protein operates within pyrimidine metabolism; UMP biosynthesis via de novo pathway; (S)-dihydroorotate from bicarbonate: step 2/3. Functionally, catalyzes the condensation of carbamoyl phosphate and aspartate to form carbamoyl aspartate and inorganic phosphate, the committed step in the de novo pyrimidine nucleotide biosynthesis pathway. The sequence is that of Aspartate carbamoyltransferase catalytic subunit from Pseudarthrobacter chlorophenolicus (strain ATCC 700700 / DSM 12829 / CIP 107037 / JCM 12360 / KCTC 9906 / NCIMB 13794 / A6) (Arthrobacter chlorophenolicus).